We begin with the raw amino-acid sequence, 103 residues long: MYAVIKTGGKQYKVAAGEKLKIEQIPAEIGSEITLDQVLAVGESASLKLGDPLVNGAAVMATVVSQGRHDKVTIFKMRRRKHYQKHQGHRQNFTEILINTIKA.

The protein belongs to the bacterial ribosomal protein bL21 family. As to quaternary structure, part of the 50S ribosomal subunit. Contacts protein L20.

This protein binds to 23S rRNA in the presence of protein L20. The chain is Large ribosomal subunit protein bL21 from Polynucleobacter necessarius subsp. necessarius (strain STIR1).